The chain runs to 141 residues: Ribonuclease P protein component (141 aa).

Over residues 114–134 (RRIKAKGERRGDGKRRTERPE) the composition is skewed to basic and acidic residues. Residues 114–141 (RRIKAKGERRGDGKRRTERPESGPVNGK) are disordered.

This sequence belongs to the RnpA family. As to quaternary structure, consists of a catalytic RNA component (M1 or rnpB) and a protein subunit.

It carries out the reaction Endonucleolytic cleavage of RNA, removing 5'-extranucleotides from tRNA precursor.. Functionally, RNaseP catalyzes the removal of the 5'-leader sequence from pre-tRNA to produce the mature 5'-terminus. It can also cleave other RNA substrates such as 4.5S RNA. The protein component plays an auxiliary but essential role in vivo by binding to the 5'-leader sequence and broadening the substrate specificity of the ribozyme. The chain is Ribonuclease P protein component from Brucella anthropi (strain ATCC 49188 / DSM 6882 / CCUG 24695 / JCM 21032 / LMG 3331 / NBRC 15819 / NCTC 12168 / Alc 37) (Ochrobactrum anthropi).